We begin with the raw amino-acid sequence, 219 residues long: Mediator of RNA polymerase II transcription subunit 18 (219 aa).

It belongs to the Mediator complex subunit 18 family. Component of the Mediator complex. Interacts with YY1 to suppress disease susceptibility via the repression of genes glutaredoxins GRX480, GRXS13 and thioredoxin TRX-h5. Binds to ABI4 to regulate abscisic acid responses; recruited by ABI4 to ABI5 promoter in the presence of abscisic acid (ABA). Interacts with SUF4 to regulate flowering time; recruited by SUF4 to FLC promoter.

It localises to the nucleus. Its function is as follows. Component of the Mediator complex, a coactivator involved in the regulated transcription of nearly all RNA polymerase II-dependent genes. Mediator functions as a bridge to convey information from gene-specific regulatory proteins to the basal RNA polymerase II transcription machinery. The Mediator complex, having a compact conformation in its free form, is recruited to promoters by direct interactions with regulatory proteins and serves for the assembly of a functional pre-initiation complex with RNA polymerase II and the general transcription factors. Involved in the regulation of histone H3 lysine tri-methylation (H3K36me3). Associates with the promoter, coding and terminator regions of target genes suggesting its function in transcription initiation, elongation and termination. Multifunctional protein which regulates plant immunity, especially during necrotrophic fungal infection (e.g. B.cinerea and A.brassicicola), flowering time and responses to hormones (e.g. abscisic acid ABA and ethylene) through interactions with distinct transcription factors. The chain is Mediator of RNA polymerase II transcription subunit 18 from Arabidopsis thaliana (Mouse-ear cress).